Reading from the N-terminus, the 282-residue chain is 3-methyl-2-oxobutanoate hydroxymethyltransferase (282 aa).

Asp-63 and Asp-102 together coordinate Mg(2+). 3-methyl-2-oxobutanoate-binding positions include Asp-63–Ser-64, Asp-102, and Lys-132. Mg(2+) is bound at residue Glu-134. The Proton acceptor role is filled by Glu-200.

The protein belongs to the PanB family. In terms of assembly, homodecamer; pentamer of dimers. Mg(2+) is required as a cofactor.

It is found in the cytoplasm. It carries out the reaction 3-methyl-2-oxobutanoate + (6R)-5,10-methylene-5,6,7,8-tetrahydrofolate + H2O = 2-dehydropantoate + (6S)-5,6,7,8-tetrahydrofolate. It functions in the pathway cofactor biosynthesis; (R)-pantothenate biosynthesis; (R)-pantoate from 3-methyl-2-oxobutanoate: step 1/2. Its function is as follows. Catalyzes the reversible reaction in which hydroxymethyl group from 5,10-methylenetetrahydrofolate is transferred onto alpha-ketoisovalerate to form ketopantoate. The chain is 3-methyl-2-oxobutanoate hydroxymethyltransferase from Mycobacterium sp. (strain JLS).